A 322-amino-acid polypeptide reads, in one-letter code: tRNA uridine(34) hydroxylase (322 aa).

The Rhodanese domain occupies glutamine 125–lysine 219. Cysteine 179 serves as the catalytic Cysteine persulfide intermediate.

The protein belongs to the TrhO family.

The enzyme catalyses uridine(34) in tRNA + AH2 + O2 = 5-hydroxyuridine(34) in tRNA + A + H2O. Catalyzes oxygen-dependent 5-hydroxyuridine (ho5U) modification at position 34 in tRNAs. The protein is tRNA uridine(34) hydroxylase of Bacillus pumilus (strain SAFR-032).